An 863-amino-acid chain; its full sequence is Scm-like with four MBT domains protein 1 (863 aa).

4 MBT repeats span residues 20 to 120, 128 to 232, 242 to 346, and 354 to 451; these read FSWE…LEAP, SDWS…LQPP, ADWQ…INPP, and FDWA…LSTP. The disordered stretch occupies residues 638-773; that stretch reads KKKNKRIGRP…SDGENKPPSP (136 aa). Residues 660 to 679 show a composition bias toward basic residues; the sequence is KTSKRRKRRKNIFVHKKKRS. The span at 680–691 shows a compositional bias: polar residues; sequence SASVDNTPVGSP. A compositionally biased stretch (acidic residues) spans 696 to 710; it reads GEDEDDADDGDDDSL. 2 positions are modified to phosphoserine: serine 764 and serine 772. The SAM domain maps to 793–861; it reads WSVADVVRFI…RIKFAFYEQF (69 aa).

Interacts with MYOD1. Component of the SLC (SFMBT1-LSD1-CoREST) corepressor complex, which also contains KDM1A/LSD1 and RCOR1/CoREST. Interacts with KDM1A/LSD1 and RCOR1/CoREST. Interacts with MYOD1. Interacts with L3MBTL3. In terms of tissue distribution, highly expressed in the testis, low expression was detected in brain, kidney, heart and lung.

The protein localises to the nucleus. In terms of biological role, histone-binding protein, which is part of various corepressor complexes. Mediates the recruitment of corepressor complexes to target genes, followed by chromatin compaction and repression of transcription. Plays a role during myogenesis: required for the maintenance of undifferentiated states of myogenic progenitor cells via interaction with MYOD1. Interaction with MYOD1 leads to the recruitment of associated corepressors and silencing of MYOD1 target genes. Part of the SLC complex in germ cells, where it may play a role during spermatogenesis. This is Scm-like with four MBT domains protein 1 (Sfmbt1) from Rattus norvegicus (Rat).